Consider the following 186-residue polypeptide: Elongation factor P (186 aa).

It belongs to the elongation factor P family.

Its subcellular location is the cytoplasm. The protein operates within protein biosynthesis; polypeptide chain elongation. Functionally, involved in peptide bond synthesis. Stimulates efficient translation and peptide-bond synthesis on native or reconstituted 70S ribosomes in vitro. Probably functions indirectly by altering the affinity of the ribosome for aminoacyl-tRNA, thus increasing their reactivity as acceptors for peptidyl transferase. The polypeptide is Elongation factor P (Prochlorococcus marinus (strain MIT 9211)).